Reading from the N-terminus, the 892-residue chain is DNA mismatch repair protein MutS (892 aa).

The interval 663–684 is disordered; it reads TNTSLREAAPTTTLSTSDQGQM. 696–703 provides a ligand contact to ATP; that stretch reads GPNASGKS.

This sequence belongs to the DNA mismatch repair MutS family.

This protein is involved in the repair of mismatches in DNA. It is possible that it carries out the mismatch recognition step. This protein has a weak ATPase activity. This chain is DNA mismatch repair protein MutS, found in Nostoc punctiforme (strain ATCC 29133 / PCC 73102).